A 117-amino-acid chain; its full sequence is DNA-binding protein DDB_G0278111 (117 aa).

The tract at residues 1-40 is disordered; it reads MSSEKEIQQQLSQMQGQGFDPEAQQRQEAQRQEANERRQG. A compositionally biased stretch (low complexity) spans 8-22; sequence QQQLSQMQGQGFDPE. Residues 23–39 are compositionally biased toward basic and acidic residues; it reads AQQRQEAQRQEANERRQ.

The protein belongs to the PDCD5 family.

This Dictyostelium discoideum (Social amoeba) protein is DNA-binding protein DDB_G0278111.